The following is a 669-amino-acid chain: DNA mismatch repair protein MutL (669 aa).

Basic and acidic residues predominate over residues 356–371; the sequence is FEQRQNTENKQEKTFS. Residues 356 to 379 are disordered; sequence FEQRQNTENKQEKTFSSEESNSKP.

This sequence belongs to the DNA mismatch repair MutL/HexB family.

This protein is involved in the repair of mismatches in DNA. It is required for dam-dependent methyl-directed DNA mismatch repair. May act as a 'molecular matchmaker', a protein that promotes the formation of a stable complex between two or more DNA-binding proteins in an ATP-dependent manner without itself being part of a final effector complex. The protein is DNA mismatch repair protein MutL of Staphylococcus aureus (strain MRSA252).